The primary structure comprises 78 residues: D-alanyl carrier protein (78 aa).

Positions 1-78 (MAFRENVLEI…MIITQLEALK (78 aa)) constitute a Carrier domain. Serine 36 is subject to O-(pantetheine 4'-phosphoryl)serine.

It belongs to the DltC family. 4'-phosphopantetheine is transferred from CoA to a specific serine of apo-DCP.

Its subcellular location is the cytoplasm. It participates in cell wall biogenesis; lipoteichoic acid biosynthesis. Carrier protein involved in the D-alanylation of lipoteichoic acid (LTA). The loading of thioester-linked D-alanine onto DltC is catalyzed by D-alanine--D-alanyl carrier protein ligase DltA. The DltC-carried D-alanyl group is further transferred to cell membrane phosphatidylglycerol (PG) by forming an ester bond, probably catalyzed by DltD. D-alanylation of LTA plays an important role in modulating the properties of the cell wall in Gram-positive bacteria, influencing the net charge of the cell wall. The polypeptide is D-alanyl carrier protein (Listeria welshimeri serovar 6b (strain ATCC 35897 / DSM 20650 / CCUG 15529 / CIP 8149 / NCTC 11857 / SLCC 5334 / V8)).